The chain runs to 343 residues: Probable F-box protein At1g67455 (343 aa).

The region spanning 1–46 (MMISDLPEDMVEEILSRVSIISLGALRWNDLSKARVICKAEARQQF) is the F-box domain.

This chain is Probable F-box protein At1g67455, found in Arabidopsis thaliana (Mouse-ear cress).